The following is a 252-amino-acid chain: MILHAQAKHGKPGLPWLVFLHGFSGDCHEWQEVGEAFADYSRLYVDLPGHGGSAAISVDGFDDVTDLLRKTLVSYNILDFWLVGYSLGGRVAMMATCQGLAGLCGVIVEGGHPGLQNAEQRAERQRSDRQWVQRFLTEPLTAVFADWYQQPVFASLNDDQRRELVALRSNNNGATLAAMLEATSLAVQPDLRANLSARTFAFYYLCGERDSKFRALAAELAADCHVIPRAGHNAHRENPAGVIASLAQILRF.

It belongs to the AB hydrolase superfamily. MenH family. As to quaternary structure, monomer.

It carries out the reaction 5-enolpyruvoyl-6-hydroxy-2-succinyl-cyclohex-3-ene-1-carboxylate = (1R,6R)-6-hydroxy-2-succinyl-cyclohexa-2,4-diene-1-carboxylate + pyruvate. It participates in quinol/quinone metabolism; 1,4-dihydroxy-2-naphthoate biosynthesis; 1,4-dihydroxy-2-naphthoate from chorismate: step 3/7. It functions in the pathway quinol/quinone metabolism; menaquinone biosynthesis. In terms of biological role, catalyzes a proton abstraction reaction that results in 2,5-elimination of pyruvate from 2-succinyl-5-enolpyruvyl-6-hydroxy-3-cyclohexene-1-carboxylate (SEPHCHC) and the formation of 2-succinyl-6-hydroxy-2,4-cyclohexadiene-1-carboxylate (SHCHC). This is 2-succinyl-6-hydroxy-2,4-cyclohexadiene-1-carboxylate synthase from Escherichia coli (strain ATCC 8739 / DSM 1576 / NBRC 3972 / NCIMB 8545 / WDCM 00012 / Crooks).